The primary structure comprises 259 residues: Small ribosomal subunit protein uS2 (259 aa).

It belongs to the universal ribosomal protein uS2 family.

In Dinoroseobacter shibae (strain DSM 16493 / NCIMB 14021 / DFL 12), this protein is Small ribosomal subunit protein uS2.